Consider the following 562-residue polypeptide: Formate--tetrahydrofolate ligase (562 aa).

71–78 (TPAGEGKS) contributes to the ATP binding site.

It belongs to the formate--tetrahydrofolate ligase family.

It catalyses the reaction (6S)-5,6,7,8-tetrahydrofolate + formate + ATP = (6R)-10-formyltetrahydrofolate + ADP + phosphate. The protein operates within one-carbon metabolism; tetrahydrofolate interconversion. In Bacillus anthracis (strain A0248), this protein is Formate--tetrahydrofolate ligase.